Consider the following 1312-residue polypeptide: MHGAGEQQQRYRYNARSDEQHHHPSTSSHQYQQQGARQMHQMHPIQATLMCTPTTTSAAASTSSSGGSNSSGGSGGHRQQGNILRIGNSIKIGDNILEPAGTLVFSQADGTPWTGQRIVVNGSTHAVVKANLFPIGTTPPVLNMQSNQNWYMNQPSGTVPMSSNAPATTSSATPDSGIQSVPTSPPSPSYAMMNDVDIGDHDDEEDDDGPADFTDMPLLKPVDEDDDCYDVPCTSEGPPPNNSNPAITTIPSSCSTPAPPKESLPTGMNVEEWGSFLIASNMDREEIVRRLMAHDPEMAKAIAMRIRELSAEESKKKKDMEAEVSSTTPTTPRARGTRTRNKCATRSTNSPDVTTSNLPEEPSTSTMGLVKENEDVEKVEGKRRGRKPKKRRGFHKESFEDLESDAKKSKAEQHEDHLPEASCSSRPESVIPPPVDPIQFRLKVREMMERKLEQLTQKMSEDMTELRLSHLTSSKMVNGERGKRRESFLRQLNEQSKKLRKGGMLGRKRLRMFMTESDILEENKDNIKKEVKEESTPPPTKLRGRLPSRRTREPSEIVNPEPVEKKFNGEYFEITKSVPSSDDIIPLWMAPSLTCGCTKGACTSDMDCLNRALRVQCSSDCSVPYCSNRRFWKEDCGNKLCVSNGPRSKRVLKTKIARRAGEFLCEYAGEVITREQAQEKFAQDRDPRIIAIAAHLFVDATKRSNIARFIKHSCKPNSRLEVWSVNGFYRAGVFALSDLNPNAEITVDKSDLLPFDMACNCGATECKRVIRGVRWRCADPNEKIVTRRFVIRNRRKTIERSSHSGLPAILQTPMDENSSIRLKMKQVLAAFAFRVRKIDGSMSRTMLPHYTLIIKFLKTKGNNPNPVEFVSLFRKWLEAIDDDDLERAFVAIESHYMSSSILSSSLQSKKAKDNAPRARALSTSCPSPVPSKRGDADLSYLESLYPIGSYDPDDAWESYSTNKKGNAVRCICGALDEEGTMVQCDTCHFWLHVDCCQYVVRSNEKAQKSKNPPSDDGEYICDFCTNKQNGLRPSADVKLTEQPDVRFENCDYYRSLINRRGIQVVLNETVYVNRVLPEDHKAMLRNLREEKKGSKQKDTNKYRFPKAATSPLPIEKVDRKNARIFRVERLFVCPGNNRFVFGSFYAWPHETYADAGRVFSKKEVFATPYYETLPLDEVIGRCLVLDTATWCKGRPKVPKFKEDDVFLCEMQIGKTQRVFEKVPPKNRYPINTNSYVFTEFTHPKKVVRDFRPYDPSNPSPKPPKTSSIPSTSSIDPPQSSSDGLPEVDTKKLSKRHIQRVLKRLVKNGSRRS.

Polar residues-rich tracts occupy residues 1–11 (MHGAGEQQQRY) and 25–36 (STSSHQYQQQGA). Disordered regions lie at residues 1–41 (MHGA…QMHQ), 54–81 (TTTS…RQQG), 154–223 (QPSG…KPVD), 312–435 (EESK…PPPV), and 524–556 (KDNI…EPSE). The segment covering 54–68 (TTTSAAASTSSSGGS) has biased composition (low complexity). Residues 69-78 (NSSGGSGGHR) are compositionally biased toward gly residues. A compositionally biased stretch (low complexity) spans 160-176 (PMSSNAPATTSSATPDS). Over residues 200–210 (DHDDEEDDDGP) the composition is skewed to acidic residues. Over residues 312 to 321 (EESKKKKDME) the composition is skewed to basic and acidic residues. Over residues 344–367 (ATRSTNSPDVTTSNLPEEPSTSTM) the composition is skewed to polar residues. A compositionally biased stretch (basic and acidic residues) spans 371–382 (KENEDVEKVEGK). Residues 383–394 (RRGRKPKKRRGF) are compositionally biased toward basic residues. Composition is skewed to basic and acidic residues over residues 395–419 (HKES…DHLP) and 524–535 (KDNIKKEVKEES). In terms of domain architecture, AWS spans 590-635 (APSLTCGCTKGACTSDMDCLNRALRVQCSSDCSVPYCSNRRFWKED). The region spanning 638-750 (NKLCVSNGPR…PNAEITVDKS (113 aa)) is the SET domain. Positions 913 to 934 (DNAPRARALSTSCPSPVPSKRG) are disordered. The PHD-type zinc finger occupies 967–1027 (AVRCICGALD…EYICDFCTNK (61 aa)). Residues 1100–1223 (NKYRFPKAAT…KTQRVFEKVP (124 aa)) form the BAH domain. Positions 1248 to 1295 (RDFRPYDPSNPSPKPPKTSSIPSTSSIDPPQSSSDGLPEVDTKKLSKR) are disordered. A compositionally biased stretch (low complexity) spans 1264-1281 (KTSSIPSTSSIDPPQSSS).

It belongs to the class V-like SAM-binding methyltransferase superfamily. Histone-lysine methyltransferase family. SET2 subfamily. Widely expressed throughout embryonic development and into adulthood.

The protein localises to the nucleus. The enzyme catalyses L-lysyl-[histone] + S-adenosyl-L-methionine = N(6)-methyl-L-lysyl-[histone] + S-adenosyl-L-homocysteine + H(+). In terms of biological role, probable histone methyltransferase. Essential protein required to maintain expression of homeotic genes egl-5 and mab-5. May play an analogous role to the trithorax Group (trxG) proteins. TrxG proteins form multiprotein complexes that are required to maintain the transcriptionally active state of homeotic genes throughout development. May act via a modification of chromatin. This is Probable histone-lysine N-methyltransferase lin-59 (lin-59) from Caenorhabditis elegans.